Consider the following 70-residue polypeptide: Uteroglobin (70 aa).

Belongs to the secretoglobin family. In terms of assembly, antiparallel homodimer; disulfide-linked. Interaction with LMBR1L is controversial. Club cells (nonciliated cells of the surface epithelium of the pulmonary airways).

The protein localises to the secreted. Its function is as follows. Binds phosphatidylcholine, phosphatidylinositol, polychlorinated biphenyls (PCB) and weakly progesterone, potent inhibitor of phospholipase A2. In Macaca fuscata fuscata (Japanese macaque), this protein is Uteroglobin (SCGB1A1).